Here is a 169-residue protein sequence, read N- to C-terminus: S-ribosylhomocysteine lyase (169 aa).

His54, His58, and Cys128 together coordinate Fe cation.

This sequence belongs to the LuxS family. Homodimer. The cofactor is Fe cation.

It carries out the reaction S-(5-deoxy-D-ribos-5-yl)-L-homocysteine = (S)-4,5-dihydroxypentane-2,3-dione + L-homocysteine. In terms of biological role, involved in the synthesis of autoinducer 2 (AI-2) which is secreted by bacteria and is used to communicate both the cell density and the metabolic potential of the environment. The regulation of gene expression in response to changes in cell density is called quorum sensing. Catalyzes the transformation of S-ribosylhomocysteine (RHC) to homocysteine (HC) and 4,5-dihydroxy-2,3-pentadione (DPD). This chain is S-ribosylhomocysteine lyase, found in Aeromonas hydrophila subsp. hydrophila (strain ATCC 7966 / DSM 30187 / BCRC 13018 / CCUG 14551 / JCM 1027 / KCTC 2358 / NCIMB 9240 / NCTC 8049).